We begin with the raw amino-acid sequence, 451 residues long: Uronate isomerase (451 aa).

The protein belongs to the metallo-dependent hydrolases superfamily. Uronate isomerase family.

The enzyme catalyses D-glucuronate = D-fructuronate. The catalysed reaction is aldehydo-D-galacturonate = keto-D-tagaturonate. It participates in carbohydrate metabolism; pentose and glucuronate interconversion. This chain is Uronate isomerase, found in Thermotoga neapolitana (strain ATCC 49049 / DSM 4359 / NBRC 107923 / NS-E).